A 171-amino-acid polypeptide reads, in one-letter code: Protein ups1 homolog (171 aa).

The required for mitochondrial targeting stretch occupies residues 1–79 (MTAICTDKTE…LNVNKSYILE (79 aa)). A PRELI/MSF1 domain is found at 2–171 (TAICTDKTEL…YVIQQKFQPS (170 aa)).

It is found in the mitochondrion inner membrane. The protein localises to the mitochondrion intermembrane space. Functionally, required for maintenance of normal mitochondrial morphology as well as PCP1-dependent processing of MGM1. This Schizosaccharomyces pombe (strain 972 / ATCC 24843) (Fission yeast) protein is Protein ups1 homolog.